Consider the following 285-residue polypeptide: uncharacterized protein (285 aa).

Disordered stretches follow at residues 115–139 (AAGK…QERN) and 152–183 (EHDV…NRGV). 2 stretches are compositionally biased toward basic and acidic residues: residues 128 to 138 (KEADVQTKQER) and 152 to 170 (EHDV…DLKT).

This is an uncharacterized protein from Escherichia coli (strain K12).